The sequence spans 383 residues: Pheromone-regulated membrane protein 10 (383 aa).

The Cytoplasmic portion of the chain corresponds to 1–65; it reads MIVSFGDATT…ILADTNLYPP (65 aa). The helical transmembrane segment at 66–86 threads the bilayer; sequence WMCVLLYAFCSAMVTPYAFGG. Position 87 (Asp-87) is a topological domain, extracellular. A helical transmembrane segment spans residues 88 to 108; sequence WVNLAISFFMGLCVGSLQFIL. Residues 109–117 lie on the Cytoplasmic side of the membrane; it reads SQKSYMYSN. The helical transmembrane segment at 118-138 threads the bilayer; sequence VFEISASIVVSFCGRAFGSIP. Topologically, residues 139–141 are extracellular; the sequence is RSH. Residues 142–162 form a helical membrane-spanning segment; it reads ICFGAVTQGSLALILPGYIIL. Residues 163–180 lie on the Cytoplasmic side of the membrane; it reads CGALELQSRSLVAGAVRM. The chain crosses the membrane as a helical span at residues 181-201; it reads FYAIIYSLFLGFGITLGSALF. Residues 202–216 lie on the Extracellular side of the membrane; it reads GWMYHNATNEISCPQ. The helical transmembrane segment at 217-237 threads the bilayer; that stretch reads LISPWFRFLFVPAFTISISLL. Over 238 to 241 the chain is Cytoplasmic; that stretch reads NQAH. A helical transmembrane segment spans residues 242–262; it reads ISQLPVMVFISCTGYVVTYWA. Over 263 to 271 the chain is Extracellular; the sequence is GKHFANSTE. The chain crosses the membrane as a helical span at residues 272–292; it reads FTAALAAFVIGVLGNLYSRIW. Residue Lys-293 is a topological domain, cytoplasmic. A helical membrane pass occupies residues 294–314; the sequence is GLAVSAMLPAIFVQVPSGIAS. At 315 to 352 the chain is on the extracellular side; that stretch reads QNSLLSGLQSANTIVNANETITTSTSDPSSSMSFGMTM. The chain crosses the membrane as a helical span at residues 353–373; sequence IQVCVGISVGLFASSLFVYPF. Residues 374–383 lie on the Cytoplasmic side of the membrane; sequence GKKKTGLFSL.

Belongs to the ThrE exporter (TC 2.A.79) family.

It is found in the membrane. This is Pheromone-regulated membrane protein 10 (PRM10) from Saccharomyces cerevisiae (strain ATCC 204508 / S288c) (Baker's yeast).